The following is a 105-amino-acid chain: Putative toxin MazF8 (105 aa).

Forms a complex with cognate antitoxin MazE8.

Putative toxic component of a type II toxin-antitoxin (TA) system. Acts as an endoribonuclease. Neutralized by coexpression with cognate antitoxin MazE8. The chain is Putative toxin MazF8 (mazF8) from Mycobacterium tuberculosis (strain CDC 1551 / Oshkosh).